Consider the following 110-residue polypeptide: Nucleoid-associated protein Sfri_2406 (110 aa).

The protein belongs to the YbaB/EbfC family. Homodimer.

It is found in the cytoplasm. The protein resides in the nucleoid. Functionally, binds to DNA and alters its conformation. May be involved in regulation of gene expression, nucleoid organization and DNA protection. In Shewanella frigidimarina (strain NCIMB 400), this protein is Nucleoid-associated protein Sfri_2406.